The chain runs to 228 residues: Ion-translocating oxidoreductase complex subunit G (228 aa).

A helical transmembrane segment spans residues A35–L55. FMN phosphoryl threonine is present on T197.

The protein belongs to the RnfG family. The complex is composed of six subunits: RnfA, RnfB, RnfC, RnfD, RnfE and RnfG. It depends on FMN as a cofactor.

The protein resides in the cell inner membrane. Its function is as follows. Part of a membrane-bound complex that couples electron transfer with translocation of ions across the membrane. This chain is Ion-translocating oxidoreductase complex subunit G, found in Stutzerimonas stutzeri (Pseudomonas stutzeri).